The chain runs to 221 residues: Large ribosomal subunit protein uL3 (221 aa).

It belongs to the universal ribosomal protein uL3 family. Part of the 50S ribosomal subunit. Forms a cluster with proteins L14 and L19.

Its function is as follows. One of the primary rRNA binding proteins, it binds directly near the 3'-end of the 23S rRNA, where it nucleates assembly of the 50S subunit. This Chlamydia muridarum (strain MoPn / Nigg) protein is Large ribosomal subunit protein uL3.